Here is a 1044-residue protein sequence, read N- to C-terminus: Isoleucine--tRNA ligase (1044 aa).

Positions 48–58 (PFATGLPHFGH) match the 'HIGH' region motif. Positions 594-598 (KMSKS) match the 'KMSKS' region motif. Lysine 597 lines the ATP pocket.

It belongs to the class-I aminoacyl-tRNA synthetase family. IleS type 2 subfamily. In terms of assembly, monomer. Requires Zn(2+) as cofactor.

It localises to the cytoplasm. It carries out the reaction tRNA(Ile) + L-isoleucine + ATP = L-isoleucyl-tRNA(Ile) + AMP + diphosphate. In terms of biological role, catalyzes the attachment of isoleucine to tRNA(Ile). As IleRS can inadvertently accommodate and process structurally similar amino acids such as valine, to avoid such errors it has two additional distinct tRNA(Ile)-dependent editing activities. One activity is designated as 'pretransfer' editing and involves the hydrolysis of activated Val-AMP. The other activity is designated 'posttransfer' editing and involves deacylation of mischarged Val-tRNA(Ile). The polypeptide is Isoleucine--tRNA ligase (Borrelia recurrentis (strain A1)).